A 72-amino-acid chain; its full sequence is Translation initiation factor IF-1 (72 aa).

The S1-like domain maps to 2–72; that stretch reads AKEDCIEMQG…SKGRIIFRSR (71 aa).

It belongs to the IF-1 family. As to quaternary structure, component of the 30S ribosomal translation pre-initiation complex which assembles on the 30S ribosome in the order IF-2 and IF-3, IF-1 and N-formylmethionyl-tRNA(fMet); mRNA recruitment can occur at any time during PIC assembly.

The protein localises to the cytoplasm. Its function is as follows. One of the essential components for the initiation of protein synthesis. Stabilizes the binding of IF-2 and IF-3 on the 30S subunit to which N-formylmethionyl-tRNA(fMet) subsequently binds. Helps modulate mRNA selection, yielding the 30S pre-initiation complex (PIC). Upon addition of the 50S ribosomal subunit IF-1, IF-2 and IF-3 are released leaving the mature 70S translation initiation complex. The chain is Translation initiation factor IF-1 from Haemophilus influenzae (strain ATCC 51907 / DSM 11121 / KW20 / Rd).